Reading from the N-terminus, the 666-residue chain is Probable potassium transport system protein Kup (666 aa).

Helical transmembrane passes span F53–L73, V89–V109, L144–T164, P181–V201, A212–I232, A247–L267, W291–L311, L324–A344, I381–F401, Y411–W431, A441–L461, and L463–T483.

It belongs to the HAK/KUP transporter (TC 2.A.72) family.

Its subcellular location is the cell inner membrane. It catalyses the reaction K(+)(in) + H(+)(in) = K(+)(out) + H(+)(out). In terms of biological role, transport of potassium into the cell. Likely operates as a K(+):H(+) symporter. The protein is Probable potassium transport system protein Kup of Nitrobacter hamburgensis (strain DSM 10229 / NCIMB 13809 / X14).